A 320-amino-acid chain; its full sequence is Thioredoxin reductase (320 aa).

36 to 43 (TGMEQGGQ) is a binding site for FAD. Cysteine 136 and cysteine 139 are joined by a disulfide. 287 to 296 (DVTDHVYRQA) lines the FAD pocket.

This sequence belongs to the class-II pyridine nucleotide-disulfide oxidoreductase family. In terms of assembly, homodimer. FAD serves as cofactor.

Its subcellular location is the cytoplasm. It carries out the reaction [thioredoxin]-dithiol + NADP(+) = [thioredoxin]-disulfide + NADPH + H(+). The polypeptide is Thioredoxin reductase (trxB) (Coxiella burnetii (strain RSA 493 / Nine Mile phase I)).